Here is a 173-residue protein sequence, read N- to C-terminus: Translation initiation factor IF-3 (173 aa).

This sequence belongs to the IF-3 family. Monomer.

It is found in the cytoplasm. IF-3 binds to the 30S ribosomal subunit and shifts the equilibrium between 70S ribosomes and their 50S and 30S subunits in favor of the free subunits, thus enhancing the availability of 30S subunits on which protein synthesis initiation begins. The chain is Translation initiation factor IF-3 from Campylobacter lari (strain RM2100 / D67 / ATCC BAA-1060).